The sequence spans 295 residues: Glycine--tRNA ligase alpha subunit (295 aa).

The protein belongs to the class-II aminoacyl-tRNA synthetase family. As to quaternary structure, tetramer of two alpha and two beta subunits.

It is found in the cytoplasm. It carries out the reaction tRNA(Gly) + glycine + ATP = glycyl-tRNA(Gly) + AMP + diphosphate. The polypeptide is Glycine--tRNA ligase alpha subunit (glyQ) (Bacillus subtilis (strain 168)).